The chain runs to 172 residues: MIDSDGFRANVGIIICNKFGQVMWARRFGQHSWQFPQGGLDDGESVEEAMYRELYEEVGLRPEHVQILTSTRSWLRYRLPKRLVRQESKPVCIGQKQKWFLLQLKGHDNTINLNSSGHPEFDDWRWVSYWYPVRQVVSFKRDVYRKVMKEFASTTLALQTREFSKKRSKQRS.

The Nudix hydrolase domain maps to 6–149; the sequence is GFRANVGIII…KRDVYRKVMK (144 aa). Residues 38-59 carry the Nudix box motif; the sequence is GGLDDGESVEEAMYRELYEEVG.

It belongs to the Nudix hydrolase family. RppH subfamily. A divalent metal cation serves as cofactor.

Functionally, accelerates the degradation of transcripts by removing pyrophosphate from the 5'-end of triphosphorylated RNA, leading to a more labile monophosphorylated state that can stimulate subsequent ribonuclease cleavage. The chain is RNA pyrophosphohydrolase from Shewanella frigidimarina (strain NCIMB 400).